The primary structure comprises 49 residues: uncharacterized protein (49 aa).

Residues 20–42 (LFLVGLTIGKMATSRILSFLGFI) traverse the membrane as a helical segment.

It localises to the membrane. This is an uncharacterized protein from Dictyostelium discoideum (Social amoeba).